Here is a 237-residue protein sequence, read N- to C-terminus: Demethylmenaquinone methyltransferase (237 aa).

Residues Thr-58, Asp-79, and 107–108 (NA) contribute to the S-adenosyl-L-methionine site.

This sequence belongs to the class I-like SAM-binding methyltransferase superfamily. MenG/UbiE family.

The catalysed reaction is a 2-demethylmenaquinol + S-adenosyl-L-methionine = a menaquinol + S-adenosyl-L-homocysteine + H(+). It functions in the pathway quinol/quinone metabolism; menaquinone biosynthesis; menaquinol from 1,4-dihydroxy-2-naphthoate: step 2/2. Methyltransferase required for the conversion of demethylmenaquinol (DMKH2) to menaquinol (MKH2). In Lactiplantibacillus plantarum (strain ATCC BAA-793 / NCIMB 8826 / WCFS1) (Lactobacillus plantarum), this protein is Demethylmenaquinone methyltransferase.